The chain runs to 523 residues: GMP synthase [glutamine-hydrolyzing] (523 aa).

In terms of domain architecture, Glutamine amidotransferase type-1 spans 8-205 (KILILDFGSQ…VVNICGCETK (198 aa)). Cysteine 85 acts as the Nucleophile in catalysis. Active-site residues include histidine 179 and glutamate 181. Residues 206–398 (WTAENIIEDA…LGLPAEMLNR (193 aa)) enclose the GMPS ATP-PPase domain. An ATP-binding site is contributed by 233–239 (SGGVDSS).

As to quaternary structure, homodimer.

The catalysed reaction is XMP + L-glutamine + ATP + H2O = GMP + L-glutamate + AMP + diphosphate + 2 H(+). It functions in the pathway purine metabolism; GMP biosynthesis; GMP from XMP (L-Gln route): step 1/1. In terms of biological role, catalyzes the synthesis of GMP from XMP. The protein is GMP synthase [glutamine-hydrolyzing] of Glaesserella parasuis serovar 5 (strain SH0165) (Haemophilus parasuis).